The primary structure comprises 530 residues: UDP-glucuronosyltransferase 2B15 (530 aa).

A signal peptide spans 1–23; that stretch reads MSGKWISALLLLQISFCFKSGNC. A glycan (N-linked (GlcNAc...) asparagine) is linked at asparagine 316. Residues 494–510 traverse the membrane as a helical segment; it reads VIGFLLSCVAVTVVLAL.

This sequence belongs to the UDP-glycosyltransferase family. In terms of processing, N-glycosylated. In terms of tissue distribution, liver. Lower levels seen in the kidney and testis.

The protein resides in the endoplasmic reticulum membrane. The enzyme catalyses glucuronate acceptor + UDP-alpha-D-glucuronate = acceptor beta-D-glucuronoside + UDP + H(+). It catalyses the reaction 17alpha-estradiol + UDP-alpha-D-glucuronate = 17alpha-estradiol 3-O-(beta-D-glucuronate) + UDP + H(+). The catalysed reaction is 16alpha,17alpha-estriol + UDP-alpha-D-glucuronate = 16alpha,17alpha-estriol 3-O-(beta-D-glucuronate) + UDP + H(+). It carries out the reaction 17beta-hydroxy-5alpha-androstan-3-one + UDP-alpha-D-glucuronate = 5alpha-dihydrotestosterone 17-O-(beta-D-glucuronate) + UDP + H(+). In terms of biological role, UDP-glucuronosyltransferase (UGT) that catalyzes phase II biotransformation reactions in which lipophilic substrates are conjugated with glucuronic acid to increase the metabolite's water solubility, thereby facilitating excretion into either the urine or bile. Essential for the elimination and detoxification of drugs, xenobiotics and endogenous compounds. Catalyzes the glucuronidation of endogenous steroid hormones such as androgens (testosterone, androsterone) and estrogens (estradiol, epiestradiol, estriol, catechol estrogens). Displays glucuronidation activity toward several classes of xenoblotic substrates, including phenolic compounds (eugenol, 4-nitrophenol, 4-hydroxybiphenyl) and phenylpropanoids (naringenin, coumarins). Catalyzes the glucuronidation of monoterpenoid alcohols such as borneol, menthol and isomenthol, a class of natural compounds used in essential oils. This chain is UDP-glucuronosyltransferase 2B15, found in Rattus norvegicus (Rat).